The sequence spans 423 residues: Polyglutamylase complex subunit TTLL1 (423 aa).

The region spanning M1–N367 is the TTL domain. ATP-binding positions include K138, Q144–G145, S181–I184, and K194–D196. A protein is bound at residue Q144. R220 contacts L-glutamate. T241–N242 is a binding site for ATP. Residue K259 participates in L-glutamate binding. Mg(2+) is bound by residues D313, E326, and N328. Residue K344 coordinates L-glutamate. The segment at D390–K423 is disordered.

This sequence belongs to the tubulin polyglutamylase family. As to quaternary structure, part of the neuronal tubulin polyglutamylase complex which contains TPGS1, TPGS2, TTLL1, LRRC49 and NICN1. Interacts with PCM1, CSTPP1 and LRRC49. Mg(2+) serves as cofactor.

It is found in the cytoplasm. The protein resides in the cytoskeleton. Its subcellular location is the cilium basal body. The protein localises to the cilium axoneme. It localises to the cell projection. It is found in the cilium. The protein resides in the flagellum. It catalyses the reaction (L-glutamyl)(n)-gamma-L-glutamyl-L-glutamyl-[protein] + L-glutamate + ATP = (L-glutamyl)(n+1)-gamma-L-glutamyl-L-glutamyl-[protein] + ADP + phosphate + H(+). Its function is as follows. Catalytic subunit of a polyglutamylase complex which modifies tubulin, generating side chains of glutamate on the gamma-carboxyl group of specific glutamate residues within the C-terminal tail of tubulin. Probably involved in the side-chain elongation step of the polyglutamylation reaction rather than the initiation step. Modifies both alpha- and beta-tubulins with a preference for the alpha-tail. Unlike most polyglutamylases of the tubulin--tyrosine ligase family, only displays a catalytic activity when in complex with other proteins as it is most likely lacking domains important for autonomous activity. Part of the neuronal tubulin polyglutamylase complex. Mediates cilia and flagella polyglutamylation which is essential for their biogenesis and motility. Involved in respiratory motile cilia function through the regulation of beating asymmetry. Essential for sperm flagella biogenesis, motility and male fertility. Involved in KLF4 glutamylation which impedes its ubiquitination, thereby leading to somatic cell reprogramming, pluripotency maintenance and embryogenesis. The chain is Polyglutamylase complex subunit TTLL1 (Ttll1) from Rattus norvegicus (Rat).